The sequence spans 260 residues: Thiazole synthase (260 aa).

Residue Lys100 is the Schiff-base intermediate with DXP of the active site. 1-deoxy-D-xylulose 5-phosphate is bound by residues Gly162, 188–189 (AG), and 210–211 (NT).

The protein belongs to the ThiG family. As to quaternary structure, homotetramer. Forms heterodimers with either ThiH or ThiS.

Its subcellular location is the cytoplasm. The catalysed reaction is [ThiS sulfur-carrier protein]-C-terminal-Gly-aminoethanethioate + 2-iminoacetate + 1-deoxy-D-xylulose 5-phosphate = [ThiS sulfur-carrier protein]-C-terminal Gly-Gly + 2-[(2R,5Z)-2-carboxy-4-methylthiazol-5(2H)-ylidene]ethyl phosphate + 2 H2O + H(+). The protein operates within cofactor biosynthesis; thiamine diphosphate biosynthesis. Catalyzes the rearrangement of 1-deoxy-D-xylulose 5-phosphate (DXP) to produce the thiazole phosphate moiety of thiamine. Sulfur is provided by the thiocarboxylate moiety of the carrier protein ThiS. In vitro, sulfur can be provided by H(2)S. This Wolinella succinogenes (strain ATCC 29543 / DSM 1740 / CCUG 13145 / JCM 31913 / LMG 7466 / NCTC 11488 / FDC 602W) (Vibrio succinogenes) protein is Thiazole synthase.